Reading from the N-terminus, the 289-residue chain is Protoheme IX farnesyltransferase 2 (289 aa).

The next 9 helical transmembrane spans lie at 4 to 24, 28 to 48, 66 to 86, 99 to 118, 124 to 144, 155 to 175, 199 to 219, 221 to 241, and 256 to 276; these read PGIIFGNLISVAGGFLLAAKG, LVLMLASLVGLSLVVASGCAI, RVTVTGEIAVGNVLAFGLALG, ALALLFAVIGYIVYVGVYSL, SVYGTLVGSFSGAVPPVVGYC, AILLLMFSLWQMPHSYAIAIF, LHIVLYIAVFALVSALLPLAG, TGIAFMAVTCATSLWWLAMAL, and QVFGFSIITITALSVTMALDF.

This sequence belongs to the UbiA prenyltransferase family. Protoheme IX farnesyltransferase subfamily.

The protein localises to the cell inner membrane. The enzyme catalyses heme b + (2E,6E)-farnesyl diphosphate + H2O = Fe(II)-heme o + diphosphate. It participates in porphyrin-containing compound metabolism; heme O biosynthesis; heme O from protoheme: step 1/1. Its function is as follows. Converts heme B (protoheme IX) to heme O by substitution of the vinyl group on carbon 2 of heme B porphyrin ring with a hydroxyethyl farnesyl side group. This is Protoheme IX farnesyltransferase 2 from Shewanella baltica (strain OS195).